Consider the following 603-residue polypeptide: Laccase 1 (603 aa).

An N-terminal signal peptide occupies residues 1–20 (MSRFARLLLIVALFFTNAWA). 2 Plastocyanin-like domains span residues 66–108 (QRPI…IHIR) and 159–349 (LVVS…MRIP). Cu cation contacts are provided by histidine 90 and histidine 92. N-linked (GlcNAc...) asparagine glycans are attached at residues asparagine 246, asparagine 269, asparagine 434, and asparagine 474. Residues 460-588 (TRDTENDGLV…GGMGIAILDG (129 aa)) form the Plastocyanin-like 3 domain. Residues histidine 496, histidine 499, and histidine 501 each contribute to the Cu cation site. N-linked (GlcNAc...) asparagine glycosylation is present at asparagine 516. Positions 570, 571, 572, and 576 each coordinate Cu cation.

The protein belongs to the multicopper oxidase family. It depends on Cu cation as a cofactor.

The protein localises to the cell surface. It participates in pigment biosynthesis. In terms of biological role, laccase; part of the Pks1 gene cluster that mediates the biosynthesis of an anthraquinone derivative pigment that contributes to conidial pigmentation that provides protection from UV radiation, heat and cold stress. The polyketide synthase Pks1 produces 1-acetyl-2,4,6,8-tetrahydroxy-9,10-anthraquinone though condensation of acetyl-CoA with malonyl-CoA. The dehydratase EthD and the laccase Mlac1 further convert the anthraquinone derivative into the final conidial pigment. The sequence is that of Laccase 1 from Metarhizium anisopliae (Entomophthora anisopliae).